Here is a 662-residue protein sequence, read N- to C-terminus: Calcium-dependent protease (662 aa).

Positions 196–529 constitute a Peptidase S8 domain; that stretch reads QWHLKQTTIG…YGRINALKAV (334 aa). Catalysis depends on charge relay system residues Asp-233, His-270, and Ser-466. A P/Homo B domain is found at 535–662; that stretch reads AQPEPVSIFT…IRSLTIELGF (128 aa).

Belongs to the peptidase S8 family.

It localises to the cytoplasm. In terms of biological role, degrades phycobiliproteins in vitro. Has a substrate specificity similar to that of trypsin. The chain is Calcium-dependent protease (prcA) from Trichormus variabilis (strain ATCC 29413 / PCC 7937) (Anabaena variabilis).